The following is a 122-amino-acid chain: Small ribosomal subunit protein uS12 (122 aa).

The disordered stretch occupies residues 1–24 (MPTINQLIRKKRKSTGKKRTAPAL). Over residues 8–20 (IRKKRKSTGKKRT) the composition is skewed to basic residues. The residue at position 89 (D89) is a 3-methylthioaspartic acid.

This sequence belongs to the universal ribosomal protein uS12 family. Part of the 30S ribosomal subunit. Contacts proteins S8 and S17. May interact with IF1 in the 30S initiation complex.

With S4 and S5 plays an important role in translational accuracy. Its function is as follows. Interacts with and stabilizes bases of the 16S rRNA that are involved in tRNA selection in the A site and with the mRNA backbone. Located at the interface of the 30S and 50S subunits, it traverses the body of the 30S subunit contacting proteins on the other side and probably holding the rRNA structure together. The combined cluster of proteins S8, S12 and S17 appears to hold together the shoulder and platform of the 30S subunit. The sequence is that of Small ribosomal subunit protein uS12 from Natranaerobius thermophilus (strain ATCC BAA-1301 / DSM 18059 / JW/NM-WN-LF).